Consider the following 197-residue polypeptide: Transposon Tn10 TetC protein (197 aa).

One can recognise an HTH tetR-type domain in the interval 12–72; the sequence is KSTYQSLVNS…ACYKQQLIMI (61 aa). The H-T-H motif DNA-binding region spans 35–54; that stretch reads SIDEISGKALVTKGAFYHHF.

The polypeptide is Transposon Tn10 TetC protein (tetC) (Escherichia coli).